We begin with the raw amino-acid sequence, 852 residues long: Bifunctional uridylyltransferase/uridylyl-removing enzyme (852 aa).

The tract at residues 1–318 (MPENLSSALE…STPVRVTLRI (318 aa)) is uridylyltransferase. Residues 319 to 672 (DDDYIQVNNQ…SRILPQSDSF (354 aa)) form a uridylyl-removing region. One can recognise an HD domain in the interval 436–558 (VDDHILAVVR…VQTHERLSAL (123 aa)). 2 ACT domains span residues 673–757 (QVMV…SCNR) and 785–852 (SVEI…EQLA).

The protein belongs to the GlnD family. Mg(2+) serves as cofactor.

It catalyses the reaction [protein-PII]-L-tyrosine + UTP = [protein-PII]-uridylyl-L-tyrosine + diphosphate. It carries out the reaction [protein-PII]-uridylyl-L-tyrosine + H2O = [protein-PII]-L-tyrosine + UMP + H(+). Its activity is regulated as follows. Uridylyltransferase (UTase) activity is inhibited by glutamine, while glutamine activates uridylyl-removing (UR) activity. Functionally, modifies, by uridylylation and deuridylylation, the PII regulatory proteins (GlnB and homologs), in response to the nitrogen status of the cell that GlnD senses through the glutamine level. Under low glutamine levels, catalyzes the conversion of the PII proteins and UTP to PII-UMP and PPi, while under higher glutamine levels, GlnD hydrolyzes PII-UMP to PII and UMP (deuridylylation). Thus, controls uridylylation state and activity of the PII proteins, and plays an important role in the regulation of nitrogen assimilation and metabolism. This Neisseria gonorrhoeae (strain ATCC 700825 / FA 1090) protein is Bifunctional uridylyltransferase/uridylyl-removing enzyme.